The sequence spans 650 residues: 1-deoxy-D-xylulose-5-phosphate synthase (650 aa).

Thiamine diphosphate contacts are provided by residues histidine 87 and 128 to 130; that span reads GHS. Position 159 (aspartate 159) interacts with Mg(2+). Residues 160–161, asparagine 188, tyrosine 299, and glutamate 383 contribute to the thiamine diphosphate site; that span reads GS. Asparagine 188 provides a ligand contact to Mg(2+).

The protein belongs to the transketolase family. DXPS subfamily. In terms of assembly, homodimer. Requires Mg(2+) as cofactor. Thiamine diphosphate serves as cofactor.

It carries out the reaction D-glyceraldehyde 3-phosphate + pyruvate + H(+) = 1-deoxy-D-xylulose 5-phosphate + CO2. Its pathway is metabolic intermediate biosynthesis; 1-deoxy-D-xylulose 5-phosphate biosynthesis; 1-deoxy-D-xylulose 5-phosphate from D-glyceraldehyde 3-phosphate and pyruvate: step 1/1. Its function is as follows. Catalyzes the acyloin condensation reaction between C atoms 2 and 3 of pyruvate and glyceraldehyde 3-phosphate to yield 1-deoxy-D-xylulose-5-phosphate (DXP). The protein is 1-deoxy-D-xylulose-5-phosphate synthase of Syntrophus aciditrophicus (strain SB).